Consider the following 205-residue polypeptide: Outer-membrane lipoprotein LolB (205 aa).

The signal sequence occupies residues 1–17 (MRLRLFLAASALALLSG). C18 carries the N-palmitoyl cysteine lipid modification. A lipid anchor (S-diacylglycerol cysteine) is attached at C18.

It belongs to the LolB family. In terms of assembly, monomer.

It is found in the cell outer membrane. Functionally, plays a critical role in the incorporation of lipoproteins in the outer membrane after they are released by the LolA protein. This is Outer-membrane lipoprotein LolB from Pseudomonas aeruginosa (strain LESB58).